A 449-amino-acid polypeptide reads, in one-letter code: Phosphoglucosamine mutase (449 aa).

Catalysis depends on S100, which acts as the Phosphoserine intermediate. 4 residues coordinate Mg(2+): S100, D241, D243, and D245. S100 is modified (phosphoserine).

The protein belongs to the phosphohexose mutase family. Mg(2+) serves as cofactor. In terms of processing, activated by phosphorylation.

The catalysed reaction is alpha-D-glucosamine 1-phosphate = D-glucosamine 6-phosphate. Functionally, catalyzes the conversion of glucosamine-6-phosphate to glucosamine-1-phosphate. The polypeptide is Phosphoglucosamine mutase (Clostridium botulinum (strain ATCC 19397 / Type A)).